The sequence spans 106 residues: Large ribosomal subunit protein uL24 (106 aa).

The interval 69–106 (SNLNPVDPKTGKATRVGRKVSSEGTLVRYSKKSGEEIK) is disordered.

It belongs to the universal ribosomal protein uL24 family. As to quaternary structure, part of the 50S ribosomal subunit.

Functionally, one of two assembly initiator proteins, it binds directly to the 5'-end of the 23S rRNA, where it nucleates assembly of the 50S subunit. In terms of biological role, one of the proteins that surrounds the polypeptide exit tunnel on the outside of the subunit. The protein is Large ribosomal subunit protein uL24 of Bacteroides fragilis (strain ATCC 25285 / DSM 2151 / CCUG 4856 / JCM 11019 / LMG 10263 / NCTC 9343 / Onslow / VPI 2553 / EN-2).